A 222-amino-acid polypeptide reads, in one-letter code: DnaJ homolog subfamily B member 9 (222 aa).

The N-terminal stretch at 1–23 (MATPQSVFVFAICILMITELILA) is a signal peptide. The 65-residue stretch at 26–90 (SYYDILGVPK…HRRKEYDTVG (65 aa)) folds into the J domain. A divergent targeting domain region spans residues 91–222 (HTAFTNGKGQ…VTTYTDCSGQ (132 aa)). S133 carries the phosphoserine modification.

In terms of assembly, interacts with HSPA5/BiP; interaction is direct. Interacts with ERN1/IRE1 (via the luminal region). Interacts with DERL1.

It is found in the endoplasmic reticulum lumen. Functionally, co-chaperone for Hsp70 protein HSPA5/BiP that acts as a key repressor of the ERN1/IRE1-mediated unfolded protein response (UPR). J domain-containing co-chaperones stimulate the ATPase activity of Hsp70 proteins and are required for efficient substrate recognition by Hsp70 proteins. In the unstressed endoplasmic reticulum, interacts with the luminal region of ERN1/IRE1 and selectively recruits HSPA5/BiP: HSPA5/BiP disrupts the dimerization of the active ERN1/IRE1 luminal region, thereby inactivating ERN1/IRE1. Also involved in endoplasmic reticulum-associated degradation (ERAD) of misfolded proteins. Required for survival of B-cell progenitors and normal antibody production. This Cricetulus griseus (Chinese hamster) protein is DnaJ homolog subfamily B member 9.